The primary structure comprises 331 residues: Beta-ketoacyl-[acyl-carrier-protein] synthase III (331 aa).

Catalysis depends on residues C115 and H255. The segment at 256–260 (QANFR) is ACP-binding. The active site involves N285.

Belongs to the thiolase-like superfamily. FabH family. As to quaternary structure, homodimer.

It is found in the cytoplasm. The catalysed reaction is malonyl-[ACP] + acetyl-CoA + H(+) = 3-oxobutanoyl-[ACP] + CO2 + CoA. It functions in the pathway lipid metabolism; fatty acid biosynthesis. Functionally, catalyzes the condensation reaction of fatty acid synthesis by the addition to an acyl acceptor of two carbons from malonyl-ACP. Catalyzes the first condensation reaction which initiates fatty acid synthesis and may therefore play a role in governing the total rate of fatty acid production. Possesses both acetoacetyl-ACP synthase and acetyl transacylase activities. Its substrate specificity determines the biosynthesis of branched-chain and/or straight-chain of fatty acids. The chain is Beta-ketoacyl-[acyl-carrier-protein] synthase III from Helicobacter pylori (strain J99 / ATCC 700824) (Campylobacter pylori J99).